The following is a 263-amino-acid chain: 4-hydroxy-tetrahydrodipicolinate reductase (263 aa).

Residues 8-13, D34, 99-101, and 125-128 each bind NAD(+); these read GACGRM, GTT, and SPNY. H157 functions as the Proton donor/acceptor in the catalytic mechanism. H158 lines the (S)-2,3,4,5-tetrahydrodipicolinate pocket. K161 (proton donor) is an active-site residue. Residue 167–168 participates in (S)-2,3,4,5-tetrahydrodipicolinate binding; that stretch reads GT.

This sequence belongs to the DapB family.

The protein resides in the cytoplasm. The catalysed reaction is (S)-2,3,4,5-tetrahydrodipicolinate + NAD(+) + H2O = (2S,4S)-4-hydroxy-2,3,4,5-tetrahydrodipicolinate + NADH + H(+). It carries out the reaction (S)-2,3,4,5-tetrahydrodipicolinate + NADP(+) + H2O = (2S,4S)-4-hydroxy-2,3,4,5-tetrahydrodipicolinate + NADPH + H(+). Its pathway is amino-acid biosynthesis; L-lysine biosynthesis via DAP pathway; (S)-tetrahydrodipicolinate from L-aspartate: step 4/4. Catalyzes the conversion of 4-hydroxy-tetrahydrodipicolinate (HTPA) to tetrahydrodipicolinate. This is 4-hydroxy-tetrahydrodipicolinate reductase from Methanosarcina acetivorans (strain ATCC 35395 / DSM 2834 / JCM 12185 / C2A).